Consider the following 38-residue polypeptide: Large ribosomal subunit protein bL36c (38 aa).

It belongs to the bacterial ribosomal protein bL36 family.

It is found in the plastid. It localises to the chloroplast. The polypeptide is Large ribosomal subunit protein bL36c (rpl36) (Mesostigma viride (Green alga)).